We begin with the raw amino-acid sequence, 111 residues long: Cytochrome c (111 aa).

Ala-1 carries the post-translational modification N-acetylalanine. Heme c contacts are provided by Cys-22, Cys-25, and His-26. Lys-80 carries the N6,N6,N6-trimethyllysine modification. Met-88 lines the heme c pocket. Residue Lys-94 is modified to N6,N6,N6-trimethyllysine.

It belongs to the cytochrome c family. Post-translationally, binds 1 heme c group covalently per subunit.

The protein resides in the mitochondrion intermembrane space. Electron carrier protein. The oxidized form of the cytochrome c heme group can accept an electron from the heme group of the cytochrome c1 subunit of cytochrome reductase. Cytochrome c then transfers this electron to the cytochrome oxidase complex, the final protein carrier in the mitochondrial electron-transport chain. The sequence is that of Cytochrome c from Sesamum indicum (Oriental sesame).